The chain runs to 129 residues: Small ribosomal subunit protein uS11 (129 aa).

This sequence belongs to the universal ribosomal protein uS11 family. In terms of assembly, part of the 30S ribosomal subunit. Interacts with proteins S7 and S18. Binds to IF-3.

In terms of biological role, located on the platform of the 30S subunit, it bridges several disparate RNA helices of the 16S rRNA. Forms part of the Shine-Dalgarno cleft in the 70S ribosome. This chain is Small ribosomal subunit protein uS11, found in Lacticaseibacillus casei (strain BL23) (Lactobacillus casei).